The following is a 323-amino-acid chain: 4-hydroxy-3-methylbut-2-enyl diphosphate reductase (323 aa).

C12 lines the [4Fe-4S] cluster pocket. (2E)-4-hydroxy-3-methylbut-2-enyl diphosphate is bound by residues H43 and H81. Dimethylallyl diphosphate is bound by residues H43 and H81. Residues H43 and H81 each contribute to the isopentenyl diphosphate site. [4Fe-4S] cluster is bound at residue C103. H131 is a binding site for (2E)-4-hydroxy-3-methylbut-2-enyl diphosphate. H131 lines the dimethylallyl diphosphate pocket. Residue H131 coordinates isopentenyl diphosphate. The active-site Proton donor is E133. T170 contacts (2E)-4-hydroxy-3-methylbut-2-enyl diphosphate. C198 provides a ligand contact to [4Fe-4S] cluster. The (2E)-4-hydroxy-3-methylbut-2-enyl diphosphate site is built by S226, N228, and S271. Positions 226, 228, and 271 each coordinate dimethylallyl diphosphate. The isopentenyl diphosphate site is built by S226, N228, and S271.

Belongs to the IspH family. Requires [4Fe-4S] cluster as cofactor.

It carries out the reaction isopentenyl diphosphate + 2 oxidized [2Fe-2S]-[ferredoxin] + H2O = (2E)-4-hydroxy-3-methylbut-2-enyl diphosphate + 2 reduced [2Fe-2S]-[ferredoxin] + 2 H(+). The catalysed reaction is dimethylallyl diphosphate + 2 oxidized [2Fe-2S]-[ferredoxin] + H2O = (2E)-4-hydroxy-3-methylbut-2-enyl diphosphate + 2 reduced [2Fe-2S]-[ferredoxin] + 2 H(+). It functions in the pathway isoprenoid biosynthesis; dimethylallyl diphosphate biosynthesis; dimethylallyl diphosphate from (2E)-4-hydroxy-3-methylbutenyl diphosphate: step 1/1. Its pathway is isoprenoid biosynthesis; isopentenyl diphosphate biosynthesis via DXP pathway; isopentenyl diphosphate from 1-deoxy-D-xylulose 5-phosphate: step 6/6. Catalyzes the conversion of 1-hydroxy-2-methyl-2-(E)-butenyl 4-diphosphate (HMBPP) into a mixture of isopentenyl diphosphate (IPP) and dimethylallyl diphosphate (DMAPP). Acts in the terminal step of the DOXP/MEP pathway for isoprenoid precursor biosynthesis. This chain is 4-hydroxy-3-methylbut-2-enyl diphosphate reductase, found in Lysinibacillus sphaericus (strain C3-41).